The primary structure comprises 341 residues: Serpentine receptor class beta-3 (341 aa).

The Extracellular portion of the chain corresponds to 1-23; the sequence is MLETNDSVCELAYQLAYHPVYRS. N-linked (GlcNAc...) asparagine glycosylation occurs at asparagine 5. A helical membrane pass occupies residues 24-44; sequence SQFWSMLVSSLSIPALIYFIT. The Cytoplasmic portion of the chain corresponds to 45–58; sequence RKIFFLHFHGNLKC. A helical transmembrane segment spans residues 59 to 79; the sequence is LLIVYFICNLLFSMALCFAFF. Over 80-103 the chain is Extracellular; the sequence is YQFLIPFFVTSKCQLLINTTLFKW. A glycan (N-linked (GlcNAc...) asparagine) is linked at asparagine 97. Residues 104-124 form a helical membrane-spanning segment; it reads GQICSFLLLTSSMLLPIGFSI. Topologically, residues 125-141 are cytoplasmic; that stretch reads ERFVALGNAQKYESSRT. The chain crosses the membrane as a helical span at residues 142 to 162; sequence FLGPVIIFIIIAVDFSIIFSV. Residues 163 to 187 lie on the Extracellular side of the membrane; that stretch reads YKNEPFTEGFYSFILVPSTTASQIN. A helical transmembrane segment spans residues 188-208; it reads MYFFVLLFVKIFNLLLNCILL. Residues 209-237 lie on the Cytoplasmic side of the membrane; that stretch reads RIHKKIRIKYYSLSVRYEMEEILQSSKFT. A helical transmembrane segment spans residues 238–258; it reads FIIRFTHLLFFGFYVVVILFV. The Extracellular portion of the chain corresponds to 259-276; the sequence is RIMGESFFNGTLNYSVAR. 2 N-linked (GlcNAc...) asparagine glycosylation sites follow: asparagine 267 and asparagine 271. A helical transmembrane segment spans residues 277–297; that stretch reads GVFCTVPTYNLIIVIIGIKSL. The Cytoplasmic segment spans residues 298-341; it reads RHLNLQRLNKVQSTVQIKSTGKEGSKNYEDIITNYWDSVSSRTP.

It belongs to the nematode receptor-like protein srb family. Expressed throughout the head.

It localises to the cell membrane. The protein resides in the perikaryon. The protein localises to the cell projection. It is found in the dendrite. Functionally, G-protein coupled receptor. This is Serpentine receptor class beta-3 from Caenorhabditis elegans.